The primary structure comprises 519 residues: Sorting nexin-2 (519 aa).

A disordered region spans residues Met1–Thr104. Low complexity-rich tracts occupy residues Leu27 to Glu50 and Ser93 to Thr104. Ser97 bears the Phosphoserine mark. A phosphothreonine mark is found at Thr101 and Thr104. Phosphoserine is present on residues Ser117 and Ser119. The PX domain maps to Phe140–Arg269. 4 residues coordinate a 1,2-diacyl-sn-glycero-3-phospho-(1D-myo-inositol-3-phosphate): Arg183, Ser185, Lys211, and Arg235. Ser185 is subject to Phosphoserine. An interaction with RhoG region spans residues Gln260–Ala519. Position 277 is a phosphoserine (Ser277). The tract at residues Gly278–Met295 is membrane-binding amphipathic helix. The 221-residue stretch at Met299–Ala519 folds into the BAR domain. Lys469 carries the post-translational modification N6-acetyllysine.

Belongs to the sorting nexin family. As to quaternary structure, predominantly forms heterodimers with BAR domain-containing sorting nexins SNX5, SNX6 and SNX32; can self-associate to form homodimers. The heterodimers are proposed to self-assemble into helical arrays on the membrane to stabilize and expand local membrane curvature underlying endosomal tubule formation. Thought to be a component of the originally described retromer complex (also called SNX-BAR retromer) which is a pentamer containing the heterotrimeric retromer cargo-selective complex (CSC), also described as vacuolar protein sorting subcomplex (VPS), and a heterodimeric membrane-deforming subcomplex formed between SNX1 or SNX2 and SNX5 or SNX6 (also called SNX-BAR subcomplex); the respective CSC and SNX-BAR subcomplexes associate with low affinity. Interacts with SNX5, SNX6, SNX32, VPS26A, VPS29, VPS35, FNBP1, KALRN, RHOG (GDP-bound form).

The protein resides in the early endosome membrane. It localises to the cell projection. The protein localises to the lamellipodium. In terms of biological role, involved in several stages of intracellular trafficking. Interacts with membranes containing phosphatidylinositol 3-phosphate (PtdIns(3P)) or phosphatidylinositol 3,5-bisphosphate (PtdIns(3,5)P2). Acts in part as component of the retromer membrane-deforming SNX-BAR subcomplex. The SNX-BAR retromer mediates retrograde transport of cargo proteins from endosomes to the trans-Golgi network (TGN) and is involved in endosome-to-plasma membrane transport for cargo protein recycling. The SNX-BAR subcomplex functions to deform the donor membrane into a tubular profile called endosome-to-TGN transport carrier (ETC). Can sense membrane curvature and has in vitro vesicle-to-membrane remodeling activity. Required for retrograde endosome-to-TGN transport of TGN38. Promotes KALRN- and RHOG-dependent but retromer-independent membrane remodeling such as lamellipodium formation; the function is dependent on GEF activity of KALRN. The polypeptide is Sorting nexin-2 (SNX2) (Homo sapiens (Human)).